The chain runs to 1295 residues: Phosphoribosylformylglycinamidine synthase (1295 aa).

The disordered stretch occupies residues 305 to 327 (WPGAATGSGGEIRDEGATGRGAK). Residues 307–318 (GAATGSGGEIRD), 386–388 (TGY), and Ala678 contribute to the ATP site. Asp679, Glu718, Asn722, and Asp884 together coordinate Mg(2+). Ser886 is a binding site for ATP. The Glutamine amidotransferase type-1 domain maps to 1041-1295 (KVAVLREQGG…IFRNARKQLG (255 aa)). The Nucleophile role is filled by Cys1135. Active-site residues include His1260 and Glu1262.

In the N-terminal section; belongs to the FGAMS family. As to quaternary structure, monomer.

Its subcellular location is the cytoplasm. It carries out the reaction N(2)-formyl-N(1)-(5-phospho-beta-D-ribosyl)glycinamide + L-glutamine + ATP + H2O = 2-formamido-N(1)-(5-O-phospho-beta-D-ribosyl)acetamidine + L-glutamate + ADP + phosphate + H(+). Its pathway is purine metabolism; IMP biosynthesis via de novo pathway; 5-amino-1-(5-phospho-D-ribosyl)imidazole from N(2)-formyl-N(1)-(5-phospho-D-ribosyl)glycinamide: step 1/2. In terms of biological role, phosphoribosylformylglycinamidine synthase involved in the purines biosynthetic pathway. Catalyzes the ATP-dependent conversion of formylglycinamide ribonucleotide (FGAR) and glutamine to yield formylglycinamidine ribonucleotide (FGAM) and glutamate. The sequence is that of Phosphoribosylformylglycinamidine synthase from Salmonella choleraesuis (strain SC-B67).